We begin with the raw amino-acid sequence, 383 residues long: Protein delta homolog 2 (383 aa).

An N-terminal signal peptide occupies residues 1–26 (MPSGCRCLHLVCLLCILGAPVKPARG). EGF-like domains follow at residues 27-58 (NDCS…LHCE), 62-89 (RMPG…KFCD), 91-129 (DEHI…RDCE), and 131-172 (KAGP…ARCE). Residues 27–306 (NDCSSLCDLA…RQEAGLGEPS (280 aa)) lie on the Extracellular side of the membrane. Disulfide bonds link Cys29–Cys40, Cys33–Cys46, Cys48–Cys57, Cys66–Cys71, Cys79–Cys88, Cys95–Cys107, Cys101–Cys117, Cys119–Cys128, Cys135–Cys148, Cys142–Cys160, Cys162–Cys171, Cys178–Cys189, Cys183–Cys198, Cys200–Cys209, Cys216–Cys227, Cys221–Cys236, and Cys238–Cys247. Asn157 is a glycosylation site (N-linked (GlcNAc...) asparagine). The region spanning 174-210 (NVDDCLMRPCANGATCLDGINRFSCLCPEGFTGRFCT) is the EGF-like 5; calcium-binding domain. One can recognise an EGF-like 6; calcium-binding domain in the interval 212 to 248 (NLDDCASRPCQRGARCRDRVHDFDCLCPSGYGGKTCE). Residues 307 to 327 (LVAVVVFGAVTAALVLSTVLL) traverse the membrane as a helical segment. Topologically, residues 328-383 (TLRAWRRGFCPPGPCCYPAPHYAPARQDQECQVSMLPTGLPLPPDLPPEPGKTTAL) are cytoplasmic. The interval 364-383 (PTGLPLPPDLPPEPGKTTAL) is disordered. The segment covering 367–377 (LPLPPDLPPEP) has biased composition (pro residues).

It localises to the membrane. Functionally, regulates adipogenesis. The protein is Protein delta homolog 2 (DLK2) of Bos taurus (Bovine).